The sequence spans 241 residues: Ribonuclease PH (241 aa).

Phosphate contacts are provided by residues Arg-87 and 125-127 (GTR).

It belongs to the RNase PH family. In terms of assembly, homohexameric ring arranged as a trimer of dimers.

It carries out the reaction tRNA(n+1) + phosphate = tRNA(n) + a ribonucleoside 5'-diphosphate. In terms of biological role, phosphorolytic 3'-5' exoribonuclease that plays an important role in tRNA 3'-end maturation. Removes nucleotide residues following the 3'-CCA terminus of tRNAs; can also add nucleotides to the ends of RNA molecules by using nucleoside diphosphates as substrates, but this may not be physiologically important. Probably plays a role in initiation of 16S rRNA degradation (leading to ribosome degradation) during starvation. The sequence is that of Ribonuclease PH from Salinispora arenicola (strain CNS-205).